Consider the following 354-residue polypeptide: Nicotinate-nucleotide--dimethylbenzimidazole phosphoribosyltransferase (354 aa).

The active-site Proton acceptor is E319.

Belongs to the CobT family.

The enzyme catalyses 5,6-dimethylbenzimidazole + nicotinate beta-D-ribonucleotide = alpha-ribazole 5'-phosphate + nicotinate + H(+). Its pathway is nucleoside biosynthesis; alpha-ribazole biosynthesis; alpha-ribazole from 5,6-dimethylbenzimidazole: step 1/2. Catalyzes the synthesis of alpha-ribazole-5'-phosphate from nicotinate mononucleotide (NAMN) and 5,6-dimethylbenzimidazole (DMB). The chain is Nicotinate-nucleotide--dimethylbenzimidazole phosphoribosyltransferase from Chlorobium chlorochromatii (strain CaD3).